A 504-amino-acid chain; its full sequence is Malonyl-CoA decarboxylase, mitochondrial (504 aa).

The N-terminal 50 residues, 1 to 50 (MRGLRRGLSRLGPRLGPWAVPRSLRRVLRAAGPWRGQSSAGSVSERGGAS), are a transit peptide targeting the mitochondrion. An alpha-helical domain region spans residues 51–201 (MEEVLSRSVP…VLKNMLSEWF (151 aa)). The segment at 202–504 (STGFLNLERV…VSQFQQNSKL (303 aa)) is catalytic domain. Ser-340 serves as the catalytic Proton acceptor. The Proton donor role is filled by His-434. The Microbody targeting signal signature appears at 502–504 (SKL).

It localises to the mitochondrion. The protein localises to the cytoplasm. It is found in the peroxisome. The catalysed reaction is malonyl-CoA + H(+) = acetyl-CoA + CO2. It functions in the pathway metabolic intermediate biosynthesis; acetyl-CoA biosynthesis; acetyl-CoA from malonyl-CoA: step 1/1. Functionally, catalyzes the conversion of malonyl-CoA to acetyl-CoA. In the fatty acid biosynthesis MCD selectively removes malonyl-CoA and thus assures that methyl-malonyl-CoA is the only chain elongating substrate for fatty acid synthase and that fatty acids with multiple methyl side chains are produced. The sequence is that of Malonyl-CoA decarboxylase, mitochondrial (MLYCD) from Anser anser anser (Western greylag goose).